Consider the following 226-residue polypeptide: Fibrillarin-like rRNA/tRNA 2'-O-methyltransferase (226 aa).

S-adenosyl-L-methionine-binding positions include 82 to 83 (TT), 100 to 101 (EF), 125 to 126 (DA), and 145 to 148 (DVAQ).

The protein belongs to the methyltransferase superfamily. Fibrillarin family. Interacts with nop5. Component of box C/D small ribonucleoprotein (sRNP) particles that contain rpl7ae, FlpA and nop5, plus a guide RNA.

Its function is as follows. Involved in pre-rRNA and tRNA processing. Utilizes the methyl donor S-adenosyl-L-methionine to catalyze the site-specific 2'-hydroxyl methylation of ribose moieties in rRNA and tRNA. Site specificity is provided by a guide RNA that base pairs with the substrate. Methylation occurs at a characteristic distance from the sequence involved in base pairing with the guide RNA. This Methanosarcina barkeri (strain Fusaro / DSM 804) protein is Fibrillarin-like rRNA/tRNA 2'-O-methyltransferase.